The primary structure comprises 878 residues: Leucine--tRNA ligase (878 aa).

The 'HIGH' region signature appears at 56-66 (PYPSGKLHMGH). The short motif at 630–634 (KMSKS) is the 'KMSKS' region element. Position 633 (Lys-633) interacts with ATP.

This sequence belongs to the class-I aminoacyl-tRNA synthetase family.

Its subcellular location is the cytoplasm. It carries out the reaction tRNA(Leu) + L-leucine + ATP = L-leucyl-tRNA(Leu) + AMP + diphosphate. In Prochlorococcus marinus (strain MIT 9303), this protein is Leucine--tRNA ligase.